A 1060-amino-acid polypeptide reads, in one-letter code: RNA-binding protein 27 (1060 aa).

Disordered regions lie at residues 80-143, 160-278, and 319-416; these read PLEP…DGKW, YDWR…PKRR, and PPPG…PPPL. Basic and acidic residues-rich tracts occupy residues 84 to 102 and 124 to 143; these read VKPE…KEEV and SRSE…DGKW. Basic residues predominate over residues 165–185; it reads GRSKSRSKSRGLSRSRSRSRG. The span at 186–211 shows a compositional bias: basic and acidic residues; it reads RSKDRDPNRNVEHRERSKFKSERNDL. 2 stretches are compositionally biased toward low complexity: residues 225-235 and 255-268; these read SSEQYSSGAQS and SWSN…SSNS. The segment at 273 to 301 adopts a C3H1-type zinc-finger fold; sequence PPPKRRCRDYDERGFCVLGDLCQFDHGND. Pro residues-rich tracts occupy residues 319–356 and 371–384; these read PPPG…PGPG and QPPP…PRPP. The span at 387-402 shows a compositional bias: polar residues; that stretch reads QSSLINSRDQPGTSAV. Thr447 carries the phosphothreonine modification. At Arg455 the chain carries Omega-N-methylarginine. A disordered region spans residues 572–594; the sequence is LTKKPWLGKQGNNNQSKPGFLRK. In terms of domain architecture, RRM spans 600–674; it reads TKLEVKKIPQ…RFIRVLWHRE (75 aa). Residues 754–775 are disordered; the sequence is HASTNQSDTSHLLNQTGGSSGE. The segment covering 755 to 770 has biased composition (polar residues); sequence ASTNQSDTSHLLNQTG. A coiled-coil region spans residues 810–887; it reads VQEVLKKKQE…KDELKTSSTV (78 aa). Ser928 carries the phosphoserine modification. Residues 943–982 are disordered; sequence GRGKTISSQGRGRGRGRGRGRGSLNHMVVDHRPKALPGGG. Phosphoserine is present on residues Ser1012 and Ser1020. The disordered stretch occupies residues 1014–1060; sequence HKPKVPSISTETEEEEVKEEETETSDLFLHDDDDEDEDEYESRSWRR. Acidic residues-rich tracts occupy residues 1024–1037 and 1044–1053; these read ETEE…ETET and DDDDEDEDEY.

The protein resides in the cytoplasm. It is found in the nucleus speckle. Functionally, may be involved in the turnover of nuclear polyadenylated (pA+) RNA. The sequence is that of RNA-binding protein 27 from Mus musculus (Mouse).